A 150-amino-acid chain; its full sequence is Probable antibacterial peptide (150 aa).

Residues 1 to 19 (MHIARFCLLSSMAVLALSA) form the signal peptide.

The protein localises to the secreted. Functionally, has antibacterial activity in vitro. This chain is Probable antibacterial peptide, found in Riptortus clavatus (Bean bug).